Consider the following 697-residue polypeptide: MMEKSLNTVTSLPLRVIYCIDRASAIRCLAKSQHAVPIQVLKEVEPKKVICQVDIQHVIQTVCRCSPELSCKSQGDFSVYFLDHTEPDELFVGLGYWSSLLLSPTLNAGTSNSDTVWVNGFIVEFGIQRSIEIKLRFQSLQNSFEVGTPETHTSSKFLSSTLPPSLIFDPSSSEKSDSISGSLFDTNYTCPVNINGLSKQKSVRELKSPSRPSALAETNVEELELDSLFHASNDISCSATSFSEPYILDHQAALDHPATDPVCSASSTTVNSAVSTKKRRRESSTISPESAYVAAQLQNPSEREQVHEFIKEQVRIARGRIEKKFTNVRGKNRIEEQLTLSLQEGKIPPYCQNCGTIKTANWRNATYMNITLMLCNACGIYWTSRRSMRPRNLWSTYKAFETEKPLENDAFAQLELAVYKLSQQRKLSISIFRELENAGRHSPLNRLTSLDSTHSAPDPNHISKPSVVNQQKSRGGPRTAKLKNDLRRIQSSPIVAPTPDTSFREPLSEIGSNDSWLVLPNSLSANIQNDVLRKTDFMCTDKENVAFPLKTTTKPMPKVNKEETEPTLPVCDSEKENDDLECYFRTPPKPTTLQKQQQSPSPWRSELFLSDPDQNVLTPRHKPKFDLSKALSSVAKSNNIENSPQLPERYDFSLELGLNSQLDNEERRDIPLMTDLVMPSSPPMVPADRHLSVENTC.

The segment at 351 to 378 (CQNCGTIKTANWRNATYMNITLMLCNAC) adopts a GATA-type; atypical zinc-finger fold. Residues 443-484 (PLNRLTSLDSTHSAPDPNHISKPSVVNQQKSRGGPRTAKLKN) are disordered. Polar residues predominate over residues 445-455 (NRLTSLDSTHS).

In terms of assembly, interacts with CENP-A.

Its subcellular location is the nucleus. The protein localises to the chromosome. The protein resides in the centromere. Required for proper chromosome segregation via regulation of CENP-A localization to the centromere. The chain is CENP-A multicopy suppressor protein 2 (ams2) from Schizosaccharomyces pombe (strain 972 / ATCC 24843) (Fission yeast).